Consider the following 172-residue polypeptide: Translation initiation factor IF-3 (172 aa).

It belongs to the IF-3 family. In terms of assembly, monomer.

The protein localises to the cytoplasm. Its function is as follows. IF-3 binds to the 30S ribosomal subunit and shifts the equilibrium between 70S ribosomes and their 50S and 30S subunits in favor of the free subunits, thus enhancing the availability of 30S subunits on which protein synthesis initiation begins. This is Translation initiation factor IF-3 from Geobacter metallireducens (strain ATCC 53774 / DSM 7210 / GS-15).